The sequence spans 444 residues: Acyl-CoA 6-desaturase (444 aa).

Residues 1-21 are disordered; that stretch reads MGKGGNQGEGSTERQAPMPTF. Residues 1 to 130 are Cytoplasmic-facing; that stretch reads MGKGGNQGEG…EDMNLFKTNH (130 aa). One can recognise a Cytochrome b5 heme-binding domain in the interval 18 to 95; it reads MPTFRWEEIQ…LKPLLIGELA (78 aa). The helical transmembrane segment at 131 to 151 threads the bilayer; the sequence is LFFFLLLSHIIVMESLAWFIL. A topological domain (lumenal) is located at residue Ser152. Residues 153 to 173 traverse the membrane as a helical segment; sequence YFGTGWIPTLVTAFVLATSQA. Residues 174 to 264 lie on the Cytoplasmic side of the membrane; that stretch reads QAGWLQHDYG…KYLPYNHQHE (91 aa). Residues 180-184 carry the Histidine box-1 motif; that stretch reads HDYGH. Residues 217–221 carry the Histidine box-2 motif; the sequence is HFQHH. Residues 265–285 traverse the membrane as a helical segment; that stretch reads YFFLIGPPLLIPMYFQYQIIM. Residues 286–305 are Lumenal-facing; it reads TMISRRDWVDLAWAISYYMR. Residues 306–326 traverse the membrane as a helical segment; it reads FFYTYIPFYGILGALVFLNFI. The Cytoplasmic segment spans residues 327–444; that stretch reads RFLESHWFVW…ELWLDAYLHK (118 aa). Residues 382–386 carry the Histidine box-3 motif; sequence QIEHH.

The protein belongs to the fatty acid desaturase type 1 family. In terms of tissue distribution, highly expressed in the adrenal gland, liver, brain, and testis, tissues where lipogenesis and steroidogenesis are active. Also detected in lung, heart, and skeletal muscle.

The protein localises to the endoplasmic reticulum membrane. It carries out the reaction (9Z,12Z)-octadecadienoyl-CoA + 2 Fe(II)-[cytochrome b5] + O2 + 2 H(+) = (6Z,9Z,12Z)-octadecatrienoyl-CoA + 2 Fe(III)-[cytochrome b5] + 2 H2O. The enzyme catalyses (9Z,12Z,15Z)-octadecatrienoyl-CoA + 2 Fe(II)-[cytochrome b5] + O2 + 2 H(+) = (6Z,9Z,12Z,15Z)-octadecatetraenoyl-CoA + 2 Fe(III)-[cytochrome b5] + 2 H2O. The catalysed reaction is (9Z,12Z,15Z,18Z,21Z)-tetracosapentaenoyl-CoA + 2 Fe(II)-[cytochrome b5] + O2 + 2 H(+) = (6Z,9Z,12Z,15Z,18Z,21Z)-tetracosahexaenoyl-CoA + 2 Fe(III)-[cytochrome b5] + 2 H2O. It catalyses the reaction (11E)-octadecenoyl-CoA + 2 Fe(II)-[cytochrome b5] + O2 + 2 H(+) = (6Z,11E)-octadecadienoyl-CoA + 2 Fe(III)-[cytochrome b5] + 2 H2O. It carries out the reaction (11Z,14Z)-eicosadienoyl-CoA + 2 Fe(II)-[cytochrome b5] + O2 + 2 H(+) = (8Z,11Z,14Z)-eicosatrienoyl-CoA + 2 Fe(III)-[cytochrome b5] + 2 H2O. The enzyme catalyses (11Z,14Z,17Z)-eicosatrienoyl-CoA + 2 Fe(II)-[cytochrome b5] + O2 + 2 H(+) = (8Z,11Z,14Z,17Z)-eicosatetraenoyl-CoA + 2 Fe(III)-[cytochrome b5] + 2 H2O. It functions in the pathway lipid metabolism; polyunsaturated fatty acid biosynthesis. Involved in the biosynthesis of highly unsaturated fatty acids (HUFA) from the essential polyunsaturated fatty acids (PUFA) linoleic acid (LA) (18:2n-6) and alpha-linolenic acid (ALA) (18:3n-3) precursors, acting as a fatty acyl-coenzyme A (CoA) desaturase that introduces a cis double bond at carbon 6 of the fatty acyl chain. Catalyzes the first and rate limiting step in this pathway which is the desaturation of LA (18:2n-6) and ALA (18:3n-3) into gamma-linoleate (GLA) (18:3n-6) and stearidonate (18:4n-3), respectively. Subsequently, in the biosynthetic pathway of HUFA n-3 series, it desaturates tetracosapentaenoate (24:5n-3) to tetracosahexaenoate (24:6n-3), which is then converted to docosahexaenoate (DHA)(22:6n-3), an important lipid for nervous system function. It can also desaturate (11E)-octadecenoate (trans-vaccenoate) at carbon 6 generating (6Z,11E)-octadecadienoate. In addition to Delta-6 activity, this enzyme exhibits Delta-8 activity with slight biases toward n-3 fatty acyl-CoA substrates. This is Acyl-CoA 6-desaturase from Mus musculus (Mouse).